Here is a 131-residue protein sequence, read N- to C-terminus: Small ribosomal subunit protein uS11 (131 aa).

Belongs to the universal ribosomal protein uS11 family. Part of the 30S ribosomal subunit. Interacts with proteins S7 and S18. Binds to IF-3.

Functionally, located on the platform of the 30S subunit, it bridges several disparate RNA helices of the 16S rRNA. Forms part of the Shine-Dalgarno cleft in the 70S ribosome. The sequence is that of Small ribosomal subunit protein uS11 from Pelobacter propionicus (strain DSM 2379 / NBRC 103807 / OttBd1).